A 257-amino-acid chain; its full sequence is Phosphonates import ATP-binding protein PhnC (257 aa).

The ABC transporter domain maps to 2-246 (IEFRNVSKVY…KFAEIYGDVA (245 aa)). Position 35-42 (35-42 (GLSGAGKS)) interacts with ATP.

The protein belongs to the ABC transporter superfamily. Phosphonates importer (TC 3.A.1.9.1) family. The complex is composed of two ATP-binding proteins (PhnC), two transmembrane proteins (PhnE) and a solute-binding protein (PhnD).

The protein localises to the cell membrane. The enzyme catalyses phosphonate(out) + ATP + H2O = phosphonate(in) + ADP + phosphate + H(+). Functionally, part of the ABC transporter complex PhnCDE involved in phosphonates import. Responsible for energy coupling to the transport system. The protein is Phosphonates import ATP-binding protein PhnC of Bacillus thuringiensis subsp. konkukian (strain 97-27).